The primary structure comprises 142 residues: Small ribosomal subunit protein uS12 (142 aa).

Positions 1–44 (MANGKYAARKLKKDRQKHRWSDTDYARRERGLGKKSDPLEGAPQ) are disordered. Residues 7–18 (AARKLKKDRQKH) are compositionally biased toward basic residues. The segment covering 19–38 (RWSDTDYARRERGLGKKSDP) has biased composition (basic and acidic residues).

The protein belongs to the universal ribosomal protein uS12 family. Part of the 30S ribosomal subunit.

Its function is as follows. With S4 and S5 plays an important role in translational accuracy. Located at the interface of the 30S and 50S subunits. The protein is Small ribosomal subunit protein uS12 of Haloarcula marismortui (strain ATCC 43049 / DSM 3752 / JCM 8966 / VKM B-1809) (Halobacterium marismortui).